The following is a 321-amino-acid chain: Replication factor C small subunit (321 aa).

46 to 53 (GPAGVGKT) contributes to the ATP binding site.

Belongs to the activator 1 small subunits family. RfcS subfamily. Heterohexamer composed of four small subunits (RfcS) and two large subunits (RfcL).

Part of the RFC clamp loader complex which loads the PCNA sliding clamp onto DNA. The complex possesses DNA-dependent ATPase activity which is further stimulated by PCNA. In conjunction with PCNA stimulates DNA synthesis by PolB, relieving inhibition by replication protein A (RPA). In Methanothermobacter thermautotrophicus (strain ATCC 29096 / DSM 1053 / JCM 10044 / NBRC 100330 / Delta H) (Methanobacterium thermoautotrophicum), this protein is Replication factor C small subunit (rfcS).